The following is a 192-amino-acid chain: Large ribosomal subunit protein bL9 (192 aa).

Positions 172 to 192 (DALRPEDFFDPEADGIDEDEA) are disordered. A compositionally biased stretch (acidic residues) spans 179 to 192 (FFDPEADGIDEDEA).

The protein belongs to the bacterial ribosomal protein bL9 family.

Binds to the 23S rRNA. The polypeptide is Large ribosomal subunit protein bL9 (Rhizobium etli (strain CIAT 652)).